Here is a 365-residue protein sequence, read N- to C-terminus: Cobalt-precorrin-5B C(1)-methyltransferase (365 aa).

This sequence belongs to the CbiD family.

The enzyme catalyses Co-precorrin-5B + S-adenosyl-L-methionine = Co-precorrin-6A + S-adenosyl-L-homocysteine. It participates in cofactor biosynthesis; adenosylcobalamin biosynthesis; cob(II)yrinate a,c-diamide from sirohydrochlorin (anaerobic route): step 6/10. Functionally, catalyzes the methylation of C-1 in cobalt-precorrin-5B to form cobalt-precorrin-6A. In Pseudomonas fluorescens (strain ATCC BAA-477 / NRRL B-23932 / Pf-5), this protein is Cobalt-precorrin-5B C(1)-methyltransferase.